Consider the following 178-residue polypeptide: uncharacterized protein (178 aa).

4 helical membrane passes run 29–49, 76–96, 105–125, and 139–159; these read AATG…AYLF, VISI…YFLL, PGIL…NPIF, and IITT…SISF.

Its subcellular location is the cell membrane. This is an uncharacterized protein from Bacillus subtilis (strain 168).